Consider the following 131-residue polypeptide: Snaclec bitiscetin subunit alpha (131 aa).

Intrachain disulfides connect cysteine 4/cysteine 15, cysteine 32/cysteine 125, and cysteine 100/cysteine 117. The region spanning 11 to 126 (YKGHCYKVFK…CGEKNPFICK (116 aa)) is the C-type lectin domain.

Belongs to the snaclec family. Heterodimer of subunits alpha and beta; disulfide-linked. As to expression, expressed by the venom gland.

It is found in the secreted. In terms of biological role, snaclec that binds to von Willebrand factor (VWF) and induces its interaction with GPIbalpha (GP1BA) (via the vWF A1 domain), resulting in platelet aggregation. The chain is Snaclec bitiscetin subunit alpha from Bitis arietans (African puff adder).